A 436-amino-acid chain; its full sequence is APO protein 1, chloroplastic (436 aa).

A chloroplast-targeting transit peptide spans 1-47 (MLLVSPACRGVYLQTIDPKPIDFSARASYALCFQIPTSIPKRECLMR). APO domains are found at residues 155–240 (ACSE…EIPE) and 329–414 (ACGY…RVPQ).

It belongs to the APO family. As to expression, expressed at low level. Expressed at higher level in leaves. Expressed at lower level in roots, stems, siliques and flowers.

It localises to the plastid. The protein localises to the chloroplast. Functionally, involved in the stable assembly of several 4Fe-4S cluster-containing complexes of chloroplasts. May participate in 4Fe-4S cofactor incorporation into psaA and/or psaB during translation. The protein is APO protein 1, chloroplastic (APO1) of Arabidopsis thaliana (Mouse-ear cress).